Consider the following 192-residue polypeptide: Cytidylate kinase (192 aa).

7 to 15 (GPAGSGKST) provides a ligand contact to ATP.

Belongs to the cytidylate kinase family. Type 2 subfamily.

The protein resides in the cytoplasm. The enzyme catalyses CMP + ATP = CDP + ADP. It catalyses the reaction dCMP + ATP = dCDP + ADP. In Natronomonas pharaonis (strain ATCC 35678 / DSM 2160 / CIP 103997 / JCM 8858 / NBRC 14720 / NCIMB 2260 / Gabara) (Halobacterium pharaonis), this protein is Cytidylate kinase.